The following is a 284-amino-acid chain: Elongation factor Ts (284 aa).

Residues Thr-80–Val-83 are involved in Mg(2+) ion dislocation from EF-Tu.

This sequence belongs to the EF-Ts family.

It localises to the cytoplasm. In terms of biological role, associates with the EF-Tu.GDP complex and induces the exchange of GDP to GTP. It remains bound to the aminoacyl-tRNA.EF-Tu.GTP complex up to the GTP hydrolysis stage on the ribosome. The sequence is that of Elongation factor Ts from Neisseria meningitidis serogroup C (strain 053442).